The following is a 1097-amino-acid chain: RE1-silencing transcription factor (1097 aa).

An interaction with SIN3A region spans residues 32-122; it reads DLHDLSKAEL…SLELSVVEPQ (91 aa). The interval 43 to 57 is interaction with SIN3B; sequence APQLIMLANVALTGE. Disordered regions lie at residues 83–103 and 127–159; these read NFSDSEEGEGLEESADIKGEP and ASGAPDIYSSNKDLPPETPGAEDKGKSSKTKPF. Positions 86–96 are enriched in acidic residues; the sequence is DSEEGEGLEES. Residues 145–418 form an interaction with ZFP90 region; it reads PGAEDKGKSS…KSKHPTCPNK (274 aa). A C2H2-type 1 zinc finger spans residues 159–181; it reads FRCKPCQYEAESEEQFVHHIRVH. Residues 201–212 form a required for binding to the neuron-restrictive silencer element region; it reads SGSSTAEEGDFS. 7 C2H2-type zinc fingers span residues 216–238, 248–270, 276–298, 304–326, 332–355, 361–383, and 389–412; these read IRCDRCGYNTNRYDHYTAHLKHH, YKCIICTYTTVSEYHWRKHLRNH, YTCGKCNYFSDRKNNYVQHVRTH, YKCELCPYSSSQKTHLTRHMRTH, FKCDQCSYVASNQHEVTRHARQVH, LNCPHCDYKTADRSNFKKHVELH, and FNCPVCDYAASKKCNLQYHFKSKH. Basic and acidic residues predominate over residues 452 to 479; sequence KIKGDVAGKKNEKSVKAEKRDVSKEKKP. Disordered stretches follow at residues 452 to 642, 774 to 837, 853 to 938, and 961 to 1049; these read KIKG…MEGA, KEPV…EQVL, ESVS…NGKH, and GINS…NAKE. Over residues 480 to 490 the composition is skewed to polar residues; sequence SNNVSVIQVTT. Basic and acidic residues-rich tracts occupy residues 495–504 and 559–570; these read SVTEVKEMDV and PKGDSKVEENKK. Over residues 577-593 the composition is skewed to basic residues; it reads KSTKKKTLKNKSSKKSS. Residues 803–836 are compositionally biased toward basic and acidic residues; that stretch reads PPLHMEPISKKPPLRKDKKEKSNMQSERARKEQV. A Phosphoserine modification is found at serine 864. The span at 913–930 shows a compositional bias: polar residues; it reads INESTHISSSGQNLNTPE. Position 971 is a phosphoserine (serine 971). Positions 1009–1087 are interaction with RCOR1; that stretch reads EGIHSHEGSD…HLNRHLVNVY (79 aa). A C2H2-type 9 zinc finger spans residues 1060-1082; that stretch reads FVCIFCDRSFRKGKDYSKHLNRH.

In terms of assembly, isoform 1 and isoform 3 form heterodimers. Isoform 3: Forms homodimers and homooligomers; binds to the neuron-restrictive silencer element (NRSE) as monomer. Interacts with SIN3A, SIN3B and RCOR1. Interacts with CDYL. Interacts with EHMT1 and EHMT2 only in the presence of CDYL. Part of a complex containing at least CDYL, REST, WIZ, SETB1, EHMT1 and EHMT2. Interacts (via zinc-finger DNA-binding domain) with ZFP90 (via N- and C-termini); the interaction inhibits REST repressor activity. Interacts (via C2H2-type zinc finger 5) with PRICKLE1. Interacts with FBXW11 and BTRC. Interacts with USP7. Post-translationally, O-glycosylated. In terms of processing, phosphorylated; phosphorylation is required for ubiquitination. Ubiquitinated; ubiquitination is mediated by BTRC and leads to proteasomal degradation in G2 phase. Ubiquitination increases during neuronal differentiation. Deubiquitinated by USP7; leading to its stabilization and promoting the maintenance of neural progenitor cells. Expressed in neurons of the prefrontal cortex, in hippocampal pyramidal neurons, dentate gyrus granule neurons and cerebellar Purkinje and granule neurons (at protein level). Expressed in dopaminergic neurons of the substantia nigra (at protein level). Expressed in neural progenitor cells (at protein level). In patients suffering from Alzheimer disease, frontotemporal dementia or dementia with Lewy bodies, decreased nuclear levels have been observed in neurons of the prefrontal cortex and the hippocampus, but not in neurons of the dentate gyrus and cerebellum (at protein level). In patients with Parkinson disease or dementia with Lewy bodies, decreased nuclear levels have been observed in dopaminergic neurons and in cortical neurons and localization to Lewy bodies and pale bodies was detected (at protein level). Expressed at higher levels in weakly invasive breast cancer cell lines and at lower levels in highly invasive breast cancer lines (at protein level). Ubiquitous. Expressed at higher levels in the tissues of the lymphocytic compartment, including spleen, thymus, peripheral blood lymphocytes and ovary.

It is found in the nucleus. The protein resides in the cytoplasm. In terms of biological role, transcriptional repressor which binds neuron-restrictive silencer element (NRSE) and represses neuronal gene transcription in non-neuronal cells. Restricts the expression of neuronal genes by associating with two distinct corepressors, SIN3A and RCOR1, which in turn recruit histone deacetylase to the promoters of REST-regulated genes. Mediates repression by recruiting the BHC complex at RE1/NRSE sites which acts by deacetylating and demethylating specific sites on histones, thereby acting as a chromatin modifier. Transcriptional repression by REST-CDYL via the recruitment of histone methyltransferase EHMT2 may be important in transformation suppression. Represses the expression of SRRM4 in non-neural cells to prevent the activation of neural-specific splicing events and to prevent production of REST isoform 3. Repressor activity may be inhibited by forming heterodimers with isoform 3, thereby preventing binding to NRSE or binding to corepressors and leading to derepression of target genes. Also maintains repression of neuronal genes in neural stem cells, and allows transcription and differentiation into neurons by dissociation from RE1/NRSE sites of target genes. Thereby is involved in maintaining the quiescent state of adult neural stem cells and preventing premature differentiation into mature neurons. Plays a role in the developmental switch in synaptic NMDA receptor composition during postnatal development, by repressing GRIN2B expression and thereby altering NMDA receptor properties from containing primarily GRIN2B to primarily GRIN2A subunits. Acts as a regulator of osteoblast differentiation. Key repressor of gene expression in hypoxia; represses genes in hypoxia by direct binding to an RE1/NRSE site on their promoter regions. May also function in stress resistance in the brain during aging; possibly by regulating expression of genes involved in cell death and in the stress response. Repressor of gene expression in the hippocampus after ischemia by directly binding to RE1/NRSE sites and recruiting SIN3A and RCOR1 to promoters of target genes, thereby promoting changes in chromatin modifications and ischemia-induced cell death. After ischemia, might play a role in repression of miR-132 expression in hippocampal neurons, thereby leading to neuronal cell death. Negatively regulates the expression of SRRM3 in breast cancer cell lines. Functionally, binds to the 3' region of the neuron-restrictive silencer element (NRSE), with lower affinity than full-length REST isoform 1. Exhibits weaker repressor activity compared to isoform 1. May negatively regulate the repressor activity of isoform 1 by binding to isoform 1, thereby preventing its binding to NRSE and leading to derepression of target genes. However, in another study, does not appear to be implicated in repressor activity of a NRSE motif-containing reporter construct nor in inhibitory activity on the isoform 1 transcriptional repressor activity. Post-transcriptional inactivation of REST by SRRM4-dependent alternative splicing into isoform 3 is required in mechanosensory hair cells in the inner ear for derepression of neuronal genes and hearing. In Homo sapiens (Human), this protein is RE1-silencing transcription factor (REST).